The sequence spans 263 residues: Pro-opiomelanocortin (263 aa).

Residues 1-25 (MLHPVWGCVVAVMGVLWFYSSGVQS) form the signal peptide. Gln26 bears the Pyrrolidone carboxylic acid mark. 2 disulfide bridges follow: Cys27–Cys49 and Cys33–Cys45. The interval 114-142 (SQPRDEVERESEEEEGLQQHRRDDKRSYS) is disordered. Basic and acidic residues predominate over residues 130-142 (LQQHRRDDKRSYS). Residue Val152 is modified to Valine amide.

Belongs to the POMC family. Specific enzymatic cleavages at paired basic residues yield the different active peptides.

Its subcellular location is the secreted. Stimulates the adrenal glands to release cortisol. In terms of biological role, anorexigenic peptide. Increases the pigmentation of skin by increasing melanin production in melanocytes. Functionally, increases the pigmentation of skin by increasing melanin production in melanocytes. Its function is as follows. Endogenous orexigenic opiate. Endogenous opiate. The polypeptide is Pro-opiomelanocortin (pomc) (Acipenser transmontanus (White sturgeon)).